Here is a 420-residue protein sequence, read N- to C-terminus: L-rhamnose isomerase (420 aa).

Mn(2+) is bound by residues histidine 262, aspartate 294, and aspartate 296.

It belongs to the rhamnose isomerase family. As to quaternary structure, homotetramer. Mn(2+) serves as cofactor.

Its subcellular location is the cytoplasm. The enzyme catalyses L-rhamnopyranose = L-rhamnulose. It functions in the pathway carbohydrate degradation; L-rhamnose degradation; glycerone phosphate from L-rhamnose: step 1/3. Catalyzes the interconversion of L-rhamnose and L-rhamnulose. This Pectobacterium carotovorum subsp. carotovorum (strain PC1) protein is L-rhamnose isomerase.